The following is a 352-amino-acid chain: Carbohydrate sulfotransferase 11 (352 aa).

At 1 to 16 the chain is on the cytoplasmic side; that stretch reads MKPALLEVMRMNRICR. The chain crosses the membrane as a helical; Signal-anchor for type II membrane protein span at residues 17-37; it reads MVLATCLGSFILVIFYFQSML. Topologically, residues 38–352 are lumenal; that stretch reads HPVMRRNPFG…YSVPNYLKLD (315 aa). Residues 124–130 and 186–194 contribute to the 3'-phosphoadenylyl sulfate site; these read PKVACTN and REPFERLVS. N-linked (GlcNAc...) asparagine glycans are attached at residues asparagine 205, asparagine 223, asparagine 321, and asparagine 342.

It belongs to the sulfotransferase 2 family. Post-translationally, N-glycosylated; required for activity and stability.

Its subcellular location is the golgi apparatus membrane. The catalysed reaction is chondroitin beta-D-glucuronate + n 3'-phosphoadenylyl sulfate = chondroitin 4'-sulfate + n adenosine 3',5'-bisphosphate + n H(+). Its function is as follows. Catalyzes the transfer of sulfate to position 4 of the N-acetylgalactosamine (GalNAc) residue of chondroitin. Chondroitin sulfate constitutes the predominant proteoglycan present in cartilage and is distributed on the surfaces of many cells and extracellular matrices. Can also sulfate Gal residues in desulfated dermatan sulfate. Preferentially sulfates in GlcA-&gt;GalNAc unit than in IdoA-&gt;GalNAc unit. Does not form 4, 6-di-O-sulfated GalNAc when chondroitin sulfate C is used as an acceptor. This chain is Carbohydrate sulfotransferase 11 (Chst11), found in Rattus norvegicus (Rat).